The chain runs to 1836 residues: MSSLADQLKVIKEKTASVVLDRKARSKIHSRSLIFDPKVASTQDYDYLYQLGLEGLDELSEIDSRFSKFRHTLFSETSVSMDRNVQTKDVISQLDKNIDAFLTLAGPFYSLAPTVKAVEWLVRRFHINMHNGEMLLLTSLPHYNQSVFVKILNVIPKNSFPKIFDWVVGYKDLLKNPPSSSILKAFHNDFEFFKLYAMFLVEQLKNGTVYQEQLSFFLSTTVQLLASLSKSLDTLNENHLPVVLEVVGFLLLPSKYETLRNIDVDTRLTAYSIIAVLASIIPISTELIRSFTESILQDPRSLEPNSVRQTLIVLSQLWRFYQGDFSDREAIVKCFANLAPSKLIKVEHLVKDLVADNYKFQKFLTFYFFATFPNPESYKIFQLVDLGKSELYFSEIAKQIVENSTATDKCRSVVIHICEELLKSNSELFIKALATQEMNIDALEMKLMTTLGSNSSVRDSDDVEFDAGEEDNNDEETEEVAVQFATAANLDSIKSSSKSFFTSSSDSEFSKLTLDLISLLRNVTVKVQKSLLLKFTTSVFSSIETGISFLIRIAFTPSIPLSIRLTAIRCTKWKLKEASTSSSSPLDLYLLIPIFLLGVYDETRVVRAGFVQLLRFIKETTTSIHANKKKVKSVLFMEDVIYDTTEASKRAIISPNDALFFTELLLKEDVLEDVIIDRSRLVPKFGQLILKTFVINQWSLNFFPVVFKWRAWNIVALENKNGTEDRFFFTDSDLSEYFTKRSNWIQQANDAKIAFFEEVEGAIVGLVGGNSTNEAKTATEVDWIIQSLNSQFSNLQIAVNSRLLEIFNNFSTVENRIKIVNKLIDLLNNDEPIESDPMDTLQTLKLDQDLFISVLGNVQIGGQIPEQGPAKRRRRSSSSTKQAMAREDINNMASTHLKKLTIILDLLETNLRNGTETIASPNLLQALFKILTDLDYLGNDGNLPVLYAQEALASCMILSIVKMKNSDETFKFDSNSIRADLIVNSIRSSQSPQVQNRLLLVIAELASLAPEIVLHSVMPIFTFMGAHTVRQDDEFSSSALQQTIAKVIPAVAANGSSSISNEIEFLLTSFVTAFQHIPRHRRVKLFTYLIRTLGSDLSLHVLLFLMGQQYCSSLNKNKMADAQVILEFTSSFLKSFSAIEQLEGISKFAELWDMIPIAELEANSEEYNKLSTRSIFGVSILSLTNSGLSTLRIEMLKYISSVVATENSNFDANTLKTKVAMVLLDSSINDDDEEKKSILGSFRNVAAFLLSSLDTFTNVSRNSEIALSLYDLLANFLNLLPIHYFVDSIFESLDVGKFSDTLSIKVAKNLVILAGAKFESELSSINIDEKIEESVLEKLLPVLLHGIKKNVDIELEQAYLDTFAIIVNKFGASTKTLATPTNSRLLLESLQAITSENCLLSESPETIISSINAITSIVNVLGVKTIGIFPKIVPPSLKIWETTTHSEDEESAKLIQSSIIVLLSCLIKKIPAFMTSSLDSIFITILSSDYVDNSIRTSVLGLVVEHMDSSQVLKSLCNIWCNKKFYENDNTGNIGLYLNTMQSTIDKIDKKSAATQSTVFIKWLIQAFEFRHYSEEADNKFDNNTIHRLESSFHSCGISYVMKLNDKKFRPLFATLVRWAVEGEGSNFSENTEVSRLVAFFKFFNKMQEQLKSIITSYFSYLLDPVASVLTRFSSGQLKDINLRRILLNSLTSSFKYDQDDYWSQQGRFDSICNPLLEQLTNIEEGIGKYLIKSITAFINNVASEEYNETLVHGLIKYISNEKEDNSSSTKIWTIRALKSIFQKMGEQWLTYLPTLIPYIAELLEDDDQAVEMEVRSGLVRVIENVLGEPLDRYLD.

One copy of the HEAT 1 repeat lies at 245–283; the sequence is EVVGFLLLPSKYETLRNIDVDTRLTAYSIIAVLASIIPI. Residues 453–473 form a disordered region; it reads SNSSVRDSDDVEFDAGEEDNN. The segment covering 461–473 has biased composition (acidic residues); the sequence is DDVEFDAGEEDNN. HEAT repeat units follow at residues 585-623 and 813-850; these read PLDL…TTTS and VENR…DQDL. The interval 863–883 is disordered; the sequence is QIPEQGPAKRRRRSSSSTKQA. 2 helical membrane passes run 998–1018 and 1085–1105; these read LLLV…HSVM and LFTY…LLFL. HEAT repeat units follow at residues 1333–1372, 1749–1787, and 1790–1828; these read ESVL…KFGA, ETLV…KMGE, and LTYL…NVLG.

The protein belongs to the HEATR1/UTP10 family. As to quaternary structure, component of the ribosomal small subunit (SSU) processome.

It localises to the nucleus. Its subcellular location is the nucleolus. It is found in the membrane. In terms of biological role, involved in nucleolar processing of pre-18S ribosomal RNA. Involved in ribosome biosynthesis. The polypeptide is U3 small nucleolar RNA-associated protein 10 (Scheffersomyces stipitis (strain ATCC 58785 / CBS 6054 / NBRC 10063 / NRRL Y-11545) (Yeast)).